The sequence spans 364 residues: Dual-specificity RNA methyltransferase RlmN (364 aa).

Residue glutamate 91 is the Proton acceptor of the active site. One can recognise a Radical SAM core domain in the interval 97–333 (EDDRGTLCIS…TTTRKTRGDD (237 aa)). Residues cysteine 104 and cysteine 338 are joined by a disulfide bond. [4Fe-4S] cluster contacts are provided by cysteine 111, cysteine 115, and cysteine 118. S-adenosyl-L-methionine-binding positions include 164-165 (GE), serine 196, 218-220 (SLH), and asparagine 295. The active-site S-methylcysteine intermediate is cysteine 338.

It belongs to the radical SAM superfamily. RlmN family. The cofactor is [4Fe-4S] cluster.

Its subcellular location is the cytoplasm. The catalysed reaction is adenosine(2503) in 23S rRNA + 2 reduced [2Fe-2S]-[ferredoxin] + 2 S-adenosyl-L-methionine = 2-methyladenosine(2503) in 23S rRNA + 5'-deoxyadenosine + L-methionine + 2 oxidized [2Fe-2S]-[ferredoxin] + S-adenosyl-L-homocysteine. The enzyme catalyses adenosine(37) in tRNA + 2 reduced [2Fe-2S]-[ferredoxin] + 2 S-adenosyl-L-methionine = 2-methyladenosine(37) in tRNA + 5'-deoxyadenosine + L-methionine + 2 oxidized [2Fe-2S]-[ferredoxin] + S-adenosyl-L-homocysteine. Specifically methylates position 2 of adenine 2503 in 23S rRNA and position 2 of adenine 37 in tRNAs. m2A2503 modification seems to play a crucial role in the proofreading step occurring at the peptidyl transferase center and thus would serve to optimize ribosomal fidelity. This is Dual-specificity RNA methyltransferase RlmN from Dechloromonas aromatica (strain RCB).